A 312-amino-acid chain; its full sequence is MADFKHVSVLPAEVIAYLAPRPGGIYVDGTLGGAGHARLILEASAPDGLLIGFDQDGQALASAGERLAPFGKRVVLVKRNFAFLEEALAEIGIEAIDGFLLDVGVSSHQLDTVERGFSFQHDAPLDMRMDLSAETTAAELVNTLSEEDLCRVIREYGEERWAKRIAAFIIKRREETPIATTLQLVDVIKAAVPKGAWEVRLHPATRTFQALRIAVNDELASLEKGLSGGVRLLKKGGRGVVISFHSLEDRIAKTTFRSLAQGCKCPREIPRCVCGNLPQVKVLTGKPVVANEVEVSSNPRSRSARLRAVEKI.

Residues 34 to 36 (AGH), D54, F81, D102, and Q109 each bind S-adenosyl-L-methionine.

It belongs to the methyltransferase superfamily. RsmH family.

The protein localises to the cytoplasm. The enzyme catalyses cytidine(1402) in 16S rRNA + S-adenosyl-L-methionine = N(4)-methylcytidine(1402) in 16S rRNA + S-adenosyl-L-homocysteine + H(+). Specifically methylates the N4 position of cytidine in position 1402 (C1402) of 16S rRNA. This Geotalea daltonii (strain DSM 22248 / JCM 15807 / FRC-32) (Geobacter daltonii) protein is Ribosomal RNA small subunit methyltransferase H.